The sequence spans 426 residues: Glutamyl-tRNA reductase (426 aa).

Substrate is bound by residues 49–52 (TCNR), Ser-109, 114–116 (EGQ), and Gln-120. Cys-50 functions as the Nucleophile in the catalytic mechanism. 189–194 (GAGETG) serves as a coordination point for NADP(+).

The protein belongs to the glutamyl-tRNA reductase family. As to quaternary structure, homodimer.

The catalysed reaction is (S)-4-amino-5-oxopentanoate + tRNA(Glu) + NADP(+) = L-glutamyl-tRNA(Glu) + NADPH + H(+). It functions in the pathway porphyrin-containing compound metabolism; protoporphyrin-IX biosynthesis; 5-aminolevulinate from L-glutamyl-tRNA(Glu): step 1/2. The protein operates within porphyrin-containing compound metabolism; chlorophyll biosynthesis. Catalyzes the NADPH-dependent reduction of glutamyl-tRNA(Glu) to glutamate 1-semialdehyde (GSA). This is Glutamyl-tRNA reductase from Chlorobium phaeobacteroides (strain BS1).